Consider the following 144-residue polypeptide: Large ribosomal subunit protein uL15 (144 aa).

Residues 1 to 54 (MRLNTLSPAPGRVTSRKRVGRGIGSGLGKTAGRGHKGLKSRSGGTVKPGFEGGQ) are disordered. Positions 21-31 (RGIGSGLGKTA) are enriched in gly residues.

This sequence belongs to the universal ribosomal protein uL15 family. As to quaternary structure, part of the 50S ribosomal subunit.

Binds to the 23S rRNA. The sequence is that of Large ribosomal subunit protein uL15 from Teredinibacter turnerae (strain ATCC 39867 / T7901).